We begin with the raw amino-acid sequence, 398 residues long: Phosphoglycerate kinase (398 aa).

Substrate-binding positions include Asp-24–Asn-26, Arg-40, His-63–Arg-66, Arg-122, and Arg-155. Residues Lys-206, Gly-294, Glu-325, and Gly-354–Ser-357 each bind ATP.

The protein belongs to the phosphoglycerate kinase family. Monomer.

It localises to the cytoplasm. The enzyme catalyses (2R)-3-phosphoglycerate + ATP = (2R)-3-phospho-glyceroyl phosphate + ADP. It participates in carbohydrate degradation; glycolysis; pyruvate from D-glyceraldehyde 3-phosphate: step 2/5. The sequence is that of Phosphoglycerate kinase from Picosynechococcus sp. (strain ATCC 27264 / PCC 7002 / PR-6) (Agmenellum quadruplicatum).